The chain runs to 257 residues: ATP synthase subunit a (257 aa).

The propeptide at 1–8 (MRHLDFVL) is removed in mature form. 7 helical membrane passes run 34-54 (LTNI…YSLL), 93-113 (FFPL…IGLV), 122-142 (HFIL…ILGF), 149-169 (FFSL…LVLI), 187-207 (ANIL…YNIM), 210-230 (GIIF…FSGL), and 231-251 (ELAI…SYIK).

This sequence belongs to the ATPase A chain family. In terms of assembly, F-type ATPases have 2 components, CF(1) - the catalytic core - and CF(0) - the membrane proton channel. CF(1) has five subunits: alpha(3), beta(3), gamma(1), delta(1), epsilon(1). CF(0) has three main subunits: a, b and c.

It is found in the mitochondrion inner membrane. Its function is as follows. Mitochondrial membrane ATP synthase (F(1)F(0) ATP synthase or Complex V) produces ATP from ADP in the presence of a proton gradient across the membrane which is generated by electron transport complexes of the respiratory chain. F-type ATPases consist of two structural domains, F(1) - containing the extramembraneous catalytic core and F(0) - containing the membrane proton channel, linked together by a central stalk and a peripheral stalk. During catalysis, ATP synthesis in the catalytic domain of F(1) is coupled via a rotary mechanism of the central stalk subunits to proton translocation. Key component of the proton channel; it may play a direct role in the translocation of protons across the membrane. This chain is ATP synthase subunit a (atp6), found in Penicillium chrysogenum (Penicillium notatum).